A 156-amino-acid polypeptide reads, in one-letter code: MKLHIVAVGHKMPGWIATGFDEYAKRMPPELRIELREVKPELRSGSRTADSVMAAERQRIEAALPKNARVVALDERGRDWTTMQLAQALPAWQQDGRDVAFVIGGADGLDPQLKSRAELLLRVSSLTLPHGMVRVLLAEQLYRAWSITQNHPYHRA.

S-adenosyl-L-methionine is bound by residues Leu-73, Gly-104, and Val-123–Leu-128.

It belongs to the RNA methyltransferase RlmH family. Homodimer.

Its subcellular location is the cytoplasm. The enzyme catalyses pseudouridine(1915) in 23S rRNA + S-adenosyl-L-methionine = N(3)-methylpseudouridine(1915) in 23S rRNA + S-adenosyl-L-homocysteine + H(+). Functionally, specifically methylates the pseudouridine at position 1915 (m3Psi1915) in 23S rRNA. The sequence is that of Ribosomal RNA large subunit methyltransferase H from Burkholderia thailandensis (strain ATCC 700388 / DSM 13276 / CCUG 48851 / CIP 106301 / E264).